A 175-amino-acid polypeptide reads, in one-letter code: ATP synthase subunit b, chloroplastic (175 aa).

The chain crosses the membrane as a helical span at residues 21-40 (LLESNVINIIILISLLIYLG).

Belongs to the ATPase B chain family. In terms of assembly, F-type ATPases have 2 components, F(1) - the catalytic core - and F(0) - the membrane proton channel. F(1) has five subunits: alpha(3), beta(3), gamma(1), delta(1), epsilon(1). F(0) has four main subunits: a(1), b(1), b'(1) and c(10-14). The alpha and beta chains form an alternating ring which encloses part of the gamma chain. F(1) is attached to F(0) by a central stalk formed by the gamma and epsilon chains, while a peripheral stalk is formed by the delta, b and b' chains.

The protein resides in the plastid. It is found in the chloroplast thylakoid membrane. Its function is as follows. F(1)F(0) ATP synthase produces ATP from ADP in the presence of a proton or sodium gradient. F-type ATPases consist of two structural domains, F(1) containing the extramembraneous catalytic core and F(0) containing the membrane proton channel, linked together by a central stalk and a peripheral stalk. During catalysis, ATP synthesis in the catalytic domain of F(1) is coupled via a rotary mechanism of the central stalk subunits to proton translocation. Component of the F(0) channel, it forms part of the peripheral stalk, linking F(1) to F(0). The protein is ATP synthase subunit b, chloroplastic of Cyanidium caldarium (Red alga).